A 407-amino-acid chain; its full sequence is Dual-specificity RNA methyltransferase RlmN (407 aa).

The Proton acceptor role is filled by Glu-136. A Radical SAM core domain is found at 144 to 378 (REDRGAVCIS…MDAGFASPIR (235 aa)). Cysteines 151 and 389 form a disulfide. [4Fe-4S] cluster-binding residues include Cys-158, Cys-162, and Cys-165. Residues 215 to 216 (GE), Ser-247, 269 to 271 (SLH), and Asn-346 each bind S-adenosyl-L-methionine. The S-methylcysteine intermediate role is filled by Cys-389.

This sequence belongs to the radical SAM superfamily. RlmN family. The cofactor is [4Fe-4S] cluster.

The protein resides in the cytoplasm. The enzyme catalyses adenosine(2503) in 23S rRNA + 2 reduced [2Fe-2S]-[ferredoxin] + 2 S-adenosyl-L-methionine = 2-methyladenosine(2503) in 23S rRNA + 5'-deoxyadenosine + L-methionine + 2 oxidized [2Fe-2S]-[ferredoxin] + S-adenosyl-L-homocysteine. It catalyses the reaction adenosine(37) in tRNA + 2 reduced [2Fe-2S]-[ferredoxin] + 2 S-adenosyl-L-methionine = 2-methyladenosine(37) in tRNA + 5'-deoxyadenosine + L-methionine + 2 oxidized [2Fe-2S]-[ferredoxin] + S-adenosyl-L-homocysteine. Its function is as follows. Specifically methylates position 2 of adenine 2503 in 23S rRNA and position 2 of adenine 37 in tRNAs. m2A2503 modification seems to play a crucial role in the proofreading step occurring at the peptidyl transferase center and thus would serve to optimize ribosomal fidelity. This is Dual-specificity RNA methyltransferase RlmN from Gluconobacter oxydans (strain 621H) (Gluconobacter suboxydans).